The sequence spans 282 residues: Protein-export membrane protein SecF (282 aa).

6 helical membrane passes run 9-29, 120-140, 149-169, 174-194, 214-234, and 236-256; these read IAIP…KGIP, EGFK…YLYF, IILS…LLGI, ATIA…ILLT, KTGL…LIVV, and LFIP…LALI.

It belongs to the SecD/SecF family. SecF subfamily. As to quaternary structure, part of the protein translocation apparatus. Forms a complex with SecD.

The protein resides in the cell membrane. Its function is as follows. Involved in protein export. This chain is Protein-export membrane protein SecF, found in Methanocaldococcus jannaschii (strain ATCC 43067 / DSM 2661 / JAL-1 / JCM 10045 / NBRC 100440) (Methanococcus jannaschii).